Reading from the N-terminus, the 237-residue chain is Orotidine 5'-phosphate decarboxylase (237 aa).

Residues Asp11, Lys34, 61–70 (DLKLHDIPNT), Thr123, Arg185, Gln194, Gly214, and Arg215 each bind substrate. Catalysis depends on Lys63, which acts as the Proton donor.

It belongs to the OMP decarboxylase family. Type 1 subfamily. As to quaternary structure, homodimer.

It catalyses the reaction orotidine 5'-phosphate + H(+) = UMP + CO2. Its pathway is pyrimidine metabolism; UMP biosynthesis via de novo pathway; UMP from orotate: step 2/2. In terms of biological role, catalyzes the decarboxylation of orotidine 5'-monophosphate (OMP) to uridine 5'-monophosphate (UMP). This chain is Orotidine 5'-phosphate decarboxylase, found in Ligilactobacillus salivarius (strain UCC118) (Lactobacillus salivarius).